The following is a 570-amino-acid chain: High-affinity hexose transporter HXT6 (570 aa).

Over 1–60 (MSQDAAIAEQTPVEHLSAVDSASHSVLSTPSNKAERDEIKAYGEGEEHEPVVEIPKRPAS) the chain is Cytoplasmic. The chain crosses the membrane as a helical span at residues 61–81 (AYVTVSIMCIMIAFGGFVFGW). Topologically, residues 82–116 (DTGTISGFINQTDFIRRFGMKHKDGTNYLSKVRTG) are extracellular. A glycan (N-linked (GlcNAc...) asparagine) is linked at N91. Residues 117 to 137 (LIVSIFNIGCAIGGIILSKLG) traverse the membrane as a helical segment. Topologically, residues 138-143 (DMYGRK) are cytoplasmic. A helical transmembrane segment spans residues 144 to 164 (VGLIVVVVIYIIGIIIQIASI). Residues 165–174 (NKWYQYFIGR) lie on the Extracellular side of the membrane. Residues 175-195 (IISGLGVGGIAVLSPMLISEV) traverse the membrane as a helical segment. Topologically, residues 196 to 201 (SPKHLR) are cytoplasmic. Residues 202 to 222 (GTLVSCYQLMITAGIFLGYCT) traverse the membrane as a helical segment. At 223–236 (NFGTKNYSNSVQWR) the chain is on the extracellular side. N228 is a glycosylation site (N-linked (GlcNAc...) asparagine). The helical transmembrane segment at 237–257 (VPLGLCFAWALFMIGGMTFVP) threads the bilayer. The Cytoplasmic segment spans residues 258-340 (ESPRYLAEVG…IQSLQQLTGD (83 aa)). Residues 341-357 (NYFFYYGTTIFKAVGLS) form a helical membrane-spanning segment. Residues 358 to 363 (DSFETS) are Extracellular-facing. The chain crosses the membrane as a helical span at residues 364-381 (IVLGIVNFASTFVGIYVV). At 382–388 (ERYGRRT) the chain is on the cytoplasmic side. A helical transmembrane segment spans residues 389–409 (CLLWGAASMTACMVVYASVGV). The Extracellular segment spans residues 410 to 431 (TRLWPNGQDQPSSKGAGNCMIV). A helical membrane pass occupies residues 432–452 (FACFYIFCFATTWAPIPYVVV). Residues 453-469 (SETFPLRVKSKAMSIAT) lie on the Cytoplasmic side of the membrane. Residues 470–490 (AANWLWGFLIGFFTPFITGAI) form a helical membrane-spanning segment. Position 491 (N491) is a topological domain, extracellular. Residues 492–512 (FYYGYVFMGCLVFMFFYVLLV) form a helical membrane-spanning segment. The Cytoplasmic segment spans residues 513-570 (VPETKGLTLEEVNTMWEEGVLPWKSASWVPPSRRGANYDAEEMAHDDKPLYKRMFSTK). K560 participates in a covalent cross-link: Glycyl lysine isopeptide (Lys-Gly) (interchain with G-Cter in ubiquitin).

This sequence belongs to the major facilitator superfamily. Sugar transporter (TC 2.A.1.1) family.

It localises to the membrane. In terms of biological role, high-affinity glucose transporter. The sequence is that of High-affinity hexose transporter HXT6 (HXT6) from Saccharomyces cerevisiae (strain ATCC 204508 / S288c) (Baker's yeast).